The chain runs to 403 residues: Argininosuccinate synthase (403 aa).

ATP is bound by residues 10–18 and A37; that span reads AYSGGLDTS. Positions 88 and 93 each coordinate L-citrulline. G118 contacts ATP. Residues T120, N124, and D125 each contribute to the L-aspartate site. N124 lines the L-citrulline pocket. L-citrulline-binding residues include R128, S178, S187, E263, and Y275.

The protein belongs to the argininosuccinate synthase family. Type 1 subfamily. Homotetramer.

The protein resides in the cytoplasm. It carries out the reaction L-citrulline + L-aspartate + ATP = 2-(N(omega)-L-arginino)succinate + AMP + diphosphate + H(+). It participates in amino-acid biosynthesis; L-arginine biosynthesis; L-arginine from L-ornithine and carbamoyl phosphate: step 2/3. The protein is Argininosuccinate synthase of Marinobacter nauticus (strain ATCC 700491 / DSM 11845 / VT8) (Marinobacter aquaeolei).